The sequence spans 453 residues: Serine/threonine-protein phosphatase 2A regulatory subunit B'' subunit gamma (453 aa).

The disordered stretch occupies residues 1 to 27 (MDWKDVLRRRLASPNSDPKRKKSEQEL). EF-hand domains are found at residues 273 to 308 (PSALRVYGQYLNLDKDHNGMLSKEELSRYGTATMTN) and 341 to 376 (KEPAALQYIFKLLDIENKGYLNVFSLNYFFRAIQEL). Ca(2+) is bound by residues D286, D288, N290, M292, and E297.

Interacts with MCM3AP/GANP, PPP5C, and the phosphatase 2A core enzyme composed of the PPP2CA catalytic subunit and the constant regulatory subunit PPP2R1A. Finds in a complex with ABCB1, TFPI2 and PPP2R3C; leading to the dephosphorylation of ABCB1.

Its subcellular location is the nucleus. The protein resides in the cytoplasm. May regulate MCM3AP phosphorylation through phosphatase recruitment. May act as a negative regulator of ABCB1 expression and function through the dephosphorylation of ABCB1 by TFPI2/PPP2R3C complex. May play a role in the activation-induced cell death of B-cells. The protein is Serine/threonine-protein phosphatase 2A regulatory subunit B'' subunit gamma (Ppp2r3c) of Rattus norvegicus (Rat).